Consider the following 405-residue polypeptide: Nuclear hormone receptor family member nhr-199 (405 aa).

A DNA-binding region (nuclear receptor) is located at residues 20–111; that stretch reads IPYCLICSEV…MGMQRSSVQQ (92 aa). 2 NR C4-type zinc fingers span residues 23 to 44 and 60 to 94; these read CLIC…CRAC and CGRN…CKAC. The 251-residue stretch at 126–376 folds into the NR LBD domain; the sequence is RGKPVLNKLR…PFSRIHGNQK (251 aa).

It belongs to the nuclear hormone receptor family.

Its subcellular location is the nucleus. Orphan nuclear receptor. The protein is Nuclear hormone receptor family member nhr-199 (nhr-199) of Caenorhabditis elegans.